The following is a 98-amino-acid chain: Integration host factor subunit alpha (98 aa).

Residues 49–71 are disordered; it reads FGNFDLRDKNQRPGRNPKTGEDI.

It belongs to the bacterial histone-like protein family. As to quaternary structure, heterodimer of an alpha and a beta chain.

This protein is one of the two subunits of integration host factor, a specific DNA-binding protein that functions in genetic recombination as well as in transcriptional and translational control. The protein is Integration host factor subunit alpha of Shewanella amazonensis (strain ATCC BAA-1098 / SB2B).